Here is a 235-residue protein sequence, read N- to C-terminus: Phosphoribosylaminoimidazole-succinocarboxamide synthase (235 aa).

Belongs to the SAICAR synthetase family.

It catalyses the reaction 5-amino-1-(5-phospho-D-ribosyl)imidazole-4-carboxylate + L-aspartate + ATP = (2S)-2-[5-amino-1-(5-phospho-beta-D-ribosyl)imidazole-4-carboxamido]succinate + ADP + phosphate + 2 H(+). It functions in the pathway purine metabolism; IMP biosynthesis via de novo pathway; 5-amino-1-(5-phospho-D-ribosyl)imidazole-4-carboxamide from 5-amino-1-(5-phospho-D-ribosyl)imidazole-4-carboxylate: step 1/2. This Streptococcus agalactiae serotype Ia (strain ATCC 27591 / A909 / CDC SS700) protein is Phosphoribosylaminoimidazole-succinocarboxamide synthase.